The chain runs to 261 residues: NAD(P)H-quinone oxidoreductase subunit K, chloroplastic (261 aa).

Cysteine 64, cysteine 65, cysteine 129, and cysteine 160 together coordinate [4Fe-4S] cluster.

It belongs to the complex I 20 kDa subunit family. NDH is composed of at least 16 different subunits, 5 of which are encoded in the nucleus. [4Fe-4S] cluster serves as cofactor.

It localises to the plastid. The protein localises to the chloroplast thylakoid membrane. It carries out the reaction a plastoquinone + NADH + (n+1) H(+)(in) = a plastoquinol + NAD(+) + n H(+)(out). The enzyme catalyses a plastoquinone + NADPH + (n+1) H(+)(in) = a plastoquinol + NADP(+) + n H(+)(out). In terms of biological role, NDH shuttles electrons from NAD(P)H:plastoquinone, via FMN and iron-sulfur (Fe-S) centers, to quinones in the photosynthetic chain and possibly in a chloroplast respiratory chain. The immediate electron acceptor for the enzyme in this species is believed to be plastoquinone. Couples the redox reaction to proton translocation, and thus conserves the redox energy in a proton gradient. This is NAD(P)H-quinone oxidoreductase subunit K, chloroplastic from Physcomitrium patens (Spreading-leaved earth moss).